The primary structure comprises 117 residues: Immunoglobulin kappa variable 1D-17 (117 aa).

The N-terminal stretch at 1–22 (MDMRVPAQLLGLLLLWFPGARC) is a signal peptide. The tract at residues 23-45 (NIQMTQSPSAMSASVGDRVTITC) is framework-1. The Ig-like domain maps to 23–117 (NIQMTQSPSA…YYCLQHNSYP (95 aa)). Cys-45 and Cys-110 form a disulfide bridge. Residues 46-56 (RARQGISNYLA) form a complementarity-determining-1 region. Residues 57-71 (WFQQKPGKVPKHLIY) form a framework-2 region. The interval 72-78 (AASSLQS) is complementarity-determining-2. The interval 79 to 110 (GVPSRFSGSGSGTEFTLTISSLQPEDFATYYC) is framework-3. A complementarity-determining-3 region spans residues 111 to 117 (LQHNSYP).

As to quaternary structure, immunoglobulins are composed of two identical heavy chains and two identical light chains; disulfide-linked.

It localises to the secreted. Its subcellular location is the cell membrane. V region of the variable domain of immunoglobulin light chains that participates in the antigen recognition. Immunoglobulins, also known as antibodies, are membrane-bound or secreted glycoproteins produced by B lymphocytes. In the recognition phase of humoral immunity, the membrane-bound immunoglobulins serve as receptors which, upon binding of a specific antigen, trigger the clonal expansion and differentiation of B lymphocytes into immunoglobulins-secreting plasma cells. Secreted immunoglobulins mediate the effector phase of humoral immunity, which results in the elimination of bound antigens. The antigen binding site is formed by the variable domain of one heavy chain, together with that of its associated light chain. Thus, each immunoglobulin has two antigen binding sites with remarkable affinity for a particular antigen. The variable domains are assembled by a process called V-(D)-J rearrangement and can then be subjected to somatic hypermutations which, after exposure to antigen and selection, allow affinity maturation for a particular antigen. This Homo sapiens (Human) protein is Immunoglobulin kappa variable 1D-17.